The sequence spans 158 residues: C-type lectin (158 aa).

The first 23 residues, 1-23 (MGHFTFISLCLMPIFLSLSGAEC), serve as a signal peptide directing secretion. 4 cysteine pairs are disulfide-bonded: C26/C37, C54/C154, C61/C156, and C129/C146. Residues 33–155 (RNGLCYKLFD…CESLFAFICR (123 aa)) form the C-type lectin domain. N111 and N121 each carry an N-linked (GlcNAc...) asparagine glycan. A Mannose-binding motif is present at residues 119–121 (EPN). Positions 127, 142, and 143 each coordinate Ca(2+).

This sequence belongs to the true venom lectin family. In terms of assembly, homodimer; non-covalently linked. As to expression, expressed by the venom gland.

It localises to the secreted. Functionally, mannose-binding lectin which recognizes specific carbohydrate structures and agglutinates a variety of animal cells by binding to cell-surface glycoproteins and glycolipids. May be a calcium-dependent lectin. The sequence is that of C-type lectin from Micrurus corallinus (Brazilian coral snake).